Here is a 78-residue protein sequence, read N- to C-terminus: Acyl carrier protein (78 aa).

One can recognise a Carrier domain in the interval 2–77 (SDSAEKVKKI…DAIDYIEANK (76 aa)). Serine 37 bears the O-(pantetheine 4'-phosphoryl)serine mark.

Belongs to the acyl carrier protein (ACP) family. Post-translationally, 4'-phosphopantetheine is transferred from CoA to a specific serine of apo-ACP by AcpS. This modification is essential for activity because fatty acids are bound in thioester linkage to the sulfhydryl of the prosthetic group.

Its subcellular location is the cytoplasm. It functions in the pathway lipid metabolism; fatty acid biosynthesis. Its function is as follows. Carrier of the growing fatty acid chain in fatty acid biosynthesis. This is Acyl carrier protein from Sphingopyxis alaskensis (strain DSM 13593 / LMG 18877 / RB2256) (Sphingomonas alaskensis).